The sequence spans 139 residues: Putative pre-16S rRNA nuclease (139 aa).

It belongs to the YqgF nuclease family.

It is found in the cytoplasm. Its function is as follows. Could be a nuclease involved in processing of the 5'-end of pre-16S rRNA. This chain is Putative pre-16S rRNA nuclease, found in Streptococcus pneumoniae (strain JJA).